The primary structure comprises 287 residues: Polyamine aminopropyltransferase (287 aa).

A PABS domain is found at 5–238 (EIWYETLHAN…GIMTFAWASN (234 aa)). Q33 serves as a coordination point for S-methyl-5'-thioadenosine. Residues H64 and D88 each coordinate spermidine. Residues E108 and 140 to 141 (DG) contribute to the S-methyl-5'-thioadenosine site. D158 acts as the Proton acceptor in catalysis. 158 to 161 (DCTD) is a binding site for spermidine. P165 contributes to the S-methyl-5'-thioadenosine binding site.

This sequence belongs to the spermidine/spermine synthase family. Homodimer or homotetramer.

The protein resides in the cytoplasm. The catalysed reaction is S-adenosyl 3-(methylsulfanyl)propylamine + putrescine = S-methyl-5'-thioadenosine + spermidine + H(+). It functions in the pathway amine and polyamine biosynthesis; spermidine biosynthesis; spermidine from putrescine: step 1/1. In terms of biological role, catalyzes the irreversible transfer of a propylamine group from the amino donor S-adenosylmethioninamine (decarboxy-AdoMet) to putrescine (1,4-diaminobutane) to yield spermidine. In Pectobacterium atrosepticum (strain SCRI 1043 / ATCC BAA-672) (Erwinia carotovora subsp. atroseptica), this protein is Polyamine aminopropyltransferase.